The primary structure comprises 290 residues: Acetyl-coenzyme A carboxylase carboxyl transferase subunit beta (290 aa).

Residues 27–290 form the CoA carboxyltransferase N-terminal domain; that stretch reads LWVKCPSCEA…LQRQPADALA (264 aa). Residues C31, C34, C50, and C53 each contribute to the Zn(2+) site. A C4-type zinc finger spans residues 31-53; the sequence is CPSCEAVLYRNDVDANLHVCPKC.

It belongs to the AccD/PCCB family. Acetyl-CoA carboxylase is a heterohexamer composed of biotin carboxyl carrier protein (AccB), biotin carboxylase (AccC) and two subunits each of ACCase subunit alpha (AccA) and ACCase subunit beta (AccD). Requires Zn(2+) as cofactor.

It localises to the cytoplasm. The enzyme catalyses N(6)-carboxybiotinyl-L-lysyl-[protein] + acetyl-CoA = N(6)-biotinyl-L-lysyl-[protein] + malonyl-CoA. Its pathway is lipid metabolism; malonyl-CoA biosynthesis; malonyl-CoA from acetyl-CoA: step 1/1. Functionally, component of the acetyl coenzyme A carboxylase (ACC) complex. Biotin carboxylase (BC) catalyzes the carboxylation of biotin on its carrier protein (BCCP) and then the CO(2) group is transferred by the transcarboxylase to acetyl-CoA to form malonyl-CoA. This chain is Acetyl-coenzyme A carboxylase carboxyl transferase subunit beta, found in Burkholderia multivorans (strain ATCC 17616 / 249).